The sequence spans 305 residues: Tyrosine recombinase XerC (305 aa).

Residues 4–95 enclose the Core-binding (CB) domain; sequence ISIQELIKQW…TVKNFYKFLE (92 aa). Positions 116-298 constitute a Tyr recombinase domain; it reads LLPKALSVDD…SIKHLEAVYN (183 aa). Residues Arg159, Lys182, His250, Arg253, and His276 contribute to the active site. The O-(3'-phospho-DNA)-tyrosine intermediate role is filled by Tyr285.

This sequence belongs to the 'phage' integrase family. XerC subfamily. Forms a cyclic heterotetrameric complex composed of two molecules of XerC and two molecules of XerD.

It is found in the cytoplasm. Functionally, site-specific tyrosine recombinase, which acts by catalyzing the cutting and rejoining of the recombining DNA molecules. The XerC-XerD complex is essential to convert dimers of the bacterial chromosome into monomers to permit their segregation at cell division. It also contributes to the segregational stability of plasmids. The chain is Tyrosine recombinase XerC from Rickettsia typhi (strain ATCC VR-144 / Wilmington).